We begin with the raw amino-acid sequence, 181 residues long: Adenine phosphoribosyltransferase (181 aa).

It belongs to the purine/pyrimidine phosphoribosyltransferase family. As to quaternary structure, homodimer.

The protein resides in the cytoplasm. It carries out the reaction AMP + diphosphate = 5-phospho-alpha-D-ribose 1-diphosphate + adenine. It functions in the pathway purine metabolism; AMP biosynthesis via salvage pathway; AMP from adenine: step 1/1. Catalyzes a salvage reaction resulting in the formation of AMP, that is energically less costly than de novo synthesis. The polypeptide is Adenine phosphoribosyltransferase (Methylorubrum extorquens (strain CM4 / NCIMB 13688) (Methylobacterium extorquens)).